The following is a 219-amino-acid chain: Protein-L-isoaspartate O-methyltransferase 2 (219 aa).

Ser-66 is a catalytic residue.

This sequence belongs to the methyltransferase superfamily. L-isoaspartyl/D-aspartyl protein methyltransferase family.

The protein localises to the cytoplasm. It catalyses the reaction [protein]-L-isoaspartate + S-adenosyl-L-methionine = [protein]-L-isoaspartate alpha-methyl ester + S-adenosyl-L-homocysteine. Functionally, catalyzes the methyl esterification of L-isoaspartyl residues in peptides and proteins that result from spontaneous decomposition of normal L-aspartyl and L-asparaginyl residues. It plays a role in the repair and/or degradation of damaged proteins. The polypeptide is Protein-L-isoaspartate O-methyltransferase 2 (Marinobacter nauticus (strain ATCC 700491 / DSM 11845 / VT8) (Marinobacter aquaeolei)).